Consider the following 304-residue polypeptide: Nod factor export ATP-binding protein I (304 aa).

Residues 6-236 form the ABC transporter domain; it reads IDFQQVEKRY…EIGCDVIEIY (231 aa). 38–45 is a binding site for ATP; that stretch reads GPNGAGKT.

Belongs to the ABC transporter superfamily. Lipooligosaccharide exporter (TC 3.A.1.102) family. The complex is composed of two ATP-binding proteins (NodI) and two transmembrane proteins (NodJ).

The protein localises to the cell inner membrane. Part of the ABC transporter complex NodIJ involved in the export of the nodulation factors (Nod factors), the bacterial signal molecules that induce symbiosis and subsequent nodulation induction. Nod factors are LCO (lipo-chitin oligosaccharide), a modified beta-1,4-linked N-acetylglucosamine oligosaccharide. This subunit is responsible for energy coupling to the transport system. The sequence is that of Nod factor export ATP-binding protein I from Burkholderia pseudomallei (strain K96243).